A 42-amino-acid polypeptide reads, in one-letter code: MKDFTTYLSTAPVLAAVWFGFLAGLLIEINRFFPDALSFSFV.

The helical transmembrane segment at 7-27 threads the bilayer; the sequence is YLSTAPVLAAVWFGFLAGLLI.

The protein belongs to the PsaJ family.

Its subcellular location is the plastid. It is found in the chloroplast thylakoid membrane. Functionally, may help in the organization of the PsaE and PsaF subunits. The protein is Photosystem I reaction center subunit IX of Nephroselmis olivacea (Green alga).